Reading from the N-terminus, the 201-residue chain is Beta-lactamase inhibitory protein (201 aa).

Positions Met-1 to Ala-36 are cleaved as a signal peptide. 2 consecutive repeat copies span residues Ala-37 to Leu-112 and Ala-116 to Val-201. 2 cysteine pairs are disulfide-bonded: Cys-66/Cys-78 and Cys-145/Cys-167.

As to quaternary structure, interacts with E.coli beta-lactamase TEM-1; interaction inhibits hydrolysis of beta-lactam antibiotics. Interacts with K.pneumoniae beta-lactamase SHV-1. Interacts with K.pneumoniae beta-lactamases KPC-2 and KPC-3; interaction inhibits hydrolysis of beta-lactam antibiotics. Interacts with E.coli beta-lactamases CTX-M-14 and CTX-M-15; interaction inhibits hydrolysis of beta-lactam antibiotics.

The protein resides in the secreted. In terms of biological role, inhibits a wide variety of beta lactamases. This Streptomyces clavuligerus protein is Beta-lactamase inhibitory protein.